A 726-amino-acid chain; its full sequence is Cyclin-T1 (726 aa).

A Phosphoserine modification is found at serine 117. The Nuclear localization signal, and interaction with Tat-TAR RNA motif lies at 253 to 270 (KRIWNWRACEAAKKTKAD). Phosphoserine is present on serine 340. Residue lysine 342 forms a Glycyl lysine isopeptide (Lys-Gly) (interchain with G-Cter in SUMO2) linkage. A disordered region spans residues 360 to 385 (VDHSLPQDGSNAFISQKQNSKSVPSA). Over residues 366-382 (QDGSNAFISQKQNSKSV) the composition is skewed to polar residues. Positions 384–425 (SAKVSLKEYRAKHAEELAAQKRQLENMEANVKSQYAYAAQNL) form a coiled coil. Serine 388 is modified (phosphoserine). At lysine 390 the chain carries N6-acetyllysine. Residue lysine 415 forms a Glycyl lysine isopeptide (Lys-Gly) (interchain with G-Cter in SUMO2) linkage. 3 positions are modified to ADP-ribosylserine: serine 416, serine 474, and serine 475. Residues 480 to 550 (IKMRIKVHAA…RPGDPKHSSQ (71 aa)) are histidine-rich domain (HRD). Residue lysine 481 forms a Glycyl lysine isopeptide (Lys-Gly) (interchain with G-Cter in SUMO2) linkage. Lysine 485 is subject to N6-(ADP-ribosyl)lysine. The residue at position 487 (histidine 487) is an ADP-ribosylhistidine. Residues 487 to 506 (HAAADKHNSVEDSVTKSREH) are compositionally biased toward basic and acidic residues. 2 disordered regions span residues 487–650 (HAAA…NGHN) and 688–726 (SDYL…PLPK). A phosphoserine mark is found at serine 495 and serine 499. Over residues 507–530 (KEKHKTHPSNHHHHHNHHSHKHSH) the composition is skewed to basic residues. The tract at residues 527–570 (KHSHSQLPVGTGNKRPGDPKHSSQTSNLAHKTYSLSSSFSSSSS) is required for interaction with ZMYND8. ADP-ribosylhistidine is present on histidine 530. 3 positions are modified to ADP-ribosylserine: serine 531, serine 549, and serine 552. ADP-ribosylhistidine is present on histidine 556. The span at 560 to 570 (SLSSSFSSSSS) shows a compositional bias: low complexity. Serine 563 is subject to ADP-ribosylserine. Residues serine 564 and serine 577 each carry the phosphoserine modification. Residues 594–609 (STKSSSLNFSFPSLPT) are compositionally biased toward low complexity. The segment covering 615–630 (GHSSDTSGLSFSQPSC) has biased composition (polar residues). At serine 637 the chain carries ADP-ribosylserine. Pro residues predominate over residues 710–726 (PPPLPSEPPPPLPPLPK).

This sequence belongs to the cyclin family. Cyclin C subfamily. Cyclin-T1 is the predominant cyclin that associates with CDK9 to form a heterodimer called P-TEFb. P-TEFb forms a complex with AFF4/AF5Q31. Component of a complex which is at least composed of HTATSF1/Tat-SF1, P-TEFb complex, RNA pol II, SUPT5H, and NCL/nucleolin. Component of the 7SK snRNP complex at least composed of P-TEFb (composed of CDK9 and CCNT1/cyclin-T1), HEXIM1, HEXIM2, BCDIN3, SART3 proteins and 7SK and U6 snRNAs. Interacts (via central region) with ZMYND8 (via N-terminus); the interaction is direct and the association appears to occur between homodimeric ZMYND8 and the activated form of the P-TEFb complex. Interacts with BRD4, targets chromatin binding. Interacts with JMJD6. Interacts with MDFIC. Interacts with HSF1. Interacts with HTATSF1. Interacts with TBX21. As to quaternary structure, (Microbial infection) Interacts with the transactivation region of HIV-1, HIV-2 and SIV Tat. In terms of assembly, (Microbial infection) Interacts with human herpes virus 1 (HHV-1) transcriptional regulator ICP22. In terms of processing, ADP-ribosylation on serine residues by PARP1 in response to DNA damage disrupts the phase separation activity of CCNT1, thereby preventing activation of CDK9. Ubiquitously expressed.

The protein localises to the nucleus. Its function is as follows. Regulatory subunit of the cyclin-dependent kinase pair (CDK9/cyclin-T1) complex, also called positive transcription elongation factor B (P-TEFb), which facilitates the transition from abortive to productive elongation by phosphorylating the CTD (C-terminal domain) of the large subunit of RNA polymerase II (RNA Pol II). Required to activate the protein kinase activity of CDK9: acts by mediating formation of liquid-liquid phase separation (LLPS) that enhances binding of P-TEFb to the CTD of RNA Pol II. In terms of biological role, (Microbial infection) In case of HIV or SIV infections, binds to the transactivation domain of the viral nuclear transcriptional activator, Tat, thereby increasing Tat's affinity for the transactivating response RNA element (TAR RNA). Serves as an essential cofactor for Tat, by promoting RNA Pol II activation, allowing transcription of viral genes. The chain is Cyclin-T1 (CCNT1) from Homo sapiens (Human).